The primary structure comprises 158 residues: NAD(P)H-quinone oxidoreductase subunit J, chloroplastic (158 aa).

This sequence belongs to the complex I 30 kDa subunit family. NDH is composed of at least 16 different subunits, 5 of which are encoded in the nucleus.

It is found in the plastid. The protein resides in the chloroplast thylakoid membrane. The catalysed reaction is a plastoquinone + NADH + (n+1) H(+)(in) = a plastoquinol + NAD(+) + n H(+)(out). It carries out the reaction a plastoquinone + NADPH + (n+1) H(+)(in) = a plastoquinol + NADP(+) + n H(+)(out). Functionally, NDH shuttles electrons from NAD(P)H:plastoquinone, via FMN and iron-sulfur (Fe-S) centers, to quinones in the photosynthetic chain and possibly in a chloroplast respiratory chain. The immediate electron acceptor for the enzyme in this species is believed to be plastoquinone. Couples the redox reaction to proton translocation, and thus conserves the redox energy in a proton gradient. The polypeptide is NAD(P)H-quinone oxidoreductase subunit J, chloroplastic (Piper cenocladum (Ant piper)).